A 308-amino-acid chain; its full sequence is Probable manganese-dependent inorganic pyrophosphatase (308 aa).

6 residues coordinate Mn(2+): His-9, Asp-13, Asp-15, Asp-75, His-97, and Asp-149.

It belongs to the PPase class C family. It depends on Mn(2+) as a cofactor.

It localises to the cytoplasm. The catalysed reaction is diphosphate + H2O = 2 phosphate + H(+). This is Probable manganese-dependent inorganic pyrophosphatase from Listeria monocytogenes serotype 4b (strain CLIP80459).